Here is a 487-residue protein sequence, read N- to C-terminus: Glycogen synthase 2 (487 aa).

An ADP-alpha-D-glucose-binding site is contributed by Lys12.

It belongs to the glycosyltransferase 1 family. Bacterial/plant glycogen synthase subfamily.

The enzyme catalyses [(1-&gt;4)-alpha-D-glucosyl](n) + ADP-alpha-D-glucose = [(1-&gt;4)-alpha-D-glucosyl](n+1) + ADP + H(+). It functions in the pathway glycan biosynthesis; glycogen biosynthesis. In terms of biological role, synthesizes alpha-1,4-glucan chains using ADP-glucose. In Methylococcus capsulatus (strain ATCC 33009 / NCIMB 11132 / Bath), this protein is Glycogen synthase 2.